The primary structure comprises 366 residues: Flagellar P-ring protein (366 aa).

An N-terminal signal peptide occupies residues M1–A22.

Belongs to the FlgI family. In terms of assembly, the basal body constitutes a major portion of the flagellar organelle and consists of four rings (L,P,S, and M) mounted on a central rod.

The protein localises to the periplasm. Its subcellular location is the bacterial flagellum basal body. Functionally, assembles around the rod to form the L-ring and probably protects the motor/basal body from shearing forces during rotation. The polypeptide is Flagellar P-ring protein (Hydrogenovibrio crunogenus (strain DSM 25203 / XCL-2) (Thiomicrospira crunogena)).